Reading from the N-terminus, the 156-residue chain is E3 ubiquitin-protein ligase RNF181 (156 aa).

The segment at 79 to 120 adopts an RING-type; atypical zinc-finger fold; that stretch reads CPVCLLEFEEGETVRQLPCEHLFHSACILPWLGKTNSCPLCR.

It belongs to the RNF181 family.

The enzyme catalyses S-ubiquitinyl-[E2 ubiquitin-conjugating enzyme]-L-cysteine + [acceptor protein]-L-lysine = [E2 ubiquitin-conjugating enzyme]-L-cysteine + N(6)-ubiquitinyl-[acceptor protein]-L-lysine.. It functions in the pathway protein modification; protein ubiquitination. Functionally, E3 ubiquitin-protein ligase which accepts ubiquitin from an E2 ubiquitin-conjugating enzyme in the form of a thioester and then directly transfers the ubiquitin to targeted substrates. Catalyzes monoubiquitination of 26S proteasome subunit PSMC2/RPT1. The sequence is that of E3 ubiquitin-protein ligase RNF181 (rnf181) from Xenopus laevis (African clawed frog).